Consider the following 291-residue polypeptide: GTP-binding protein RHO4 (291 aa).

Residues 14 to 31 (GNESNIVSQGSPSSSNLP) are compositionally biased toward polar residues. The segment at 14 to 45 (GNESNIVSQGSPSSSNLPESPGTLDEKNLPRL) is disordered. 79–86 (GDGAVGKT) lines the GTP pocket. The short motif at 101–109 (YIPTIFENY) is the Effector region element. GTP is bound by residues 127-131 (DTAGQ) and 185-188 (LKSD). A disordered region spans residues 250–273 (THTIKNPFKRNTTRSDIDSSTGDT). Phosphoserine occurs at positions 264, 268, and 276. Residue Cys288 is modified to Cysteine methyl ester. Cys288 carries the S-farnesyl cysteine lipid modification. Residues 289–291 (IIM) constitute a propeptide, removed in mature form.

This sequence belongs to the small GTPase superfamily. Rho family. As to quaternary structure, interacts with BEM4.

The protein localises to the cell membrane. The enzyme catalyses GTP + H2O = GDP + phosphate + H(+). Plays an important role in cell growth. Required to keep the uninucleated state. May be involved in the organization of the cytoskeleton which affects microtubule functions. Most likely RHO3 and RHO4 of S.cerevisiae regulate partially overlapping but different pathways. This chain is GTP-binding protein RHO4 (RHO4), found in Saccharomyces cerevisiae (strain ATCC 204508 / S288c) (Baker's yeast).